A 591-amino-acid chain; its full sequence is Aspartate--tRNA(Asp/Asn) ligase (591 aa).

E175 contributes to the L-aspartate binding site. The tract at residues Q199–K202 is aspartate. Residues R221 and H453 each contribute to the L-aspartate site. Residue R221 to E223 coordinates ATP. E486 lines the ATP pocket. R493 is a binding site for L-aspartate. ATP is bound at residue G538–R541.

It belongs to the class-II aminoacyl-tRNA synthetase family. Type 1 subfamily. Homodimer.

The protein resides in the cytoplasm. It catalyses the reaction tRNA(Asx) + L-aspartate + ATP = L-aspartyl-tRNA(Asx) + AMP + diphosphate. Its function is as follows. Aspartyl-tRNA synthetase with relaxed tRNA specificity since it is able to aspartylate not only its cognate tRNA(Asp) but also tRNA(Asn). Reaction proceeds in two steps: L-aspartate is first activated by ATP to form Asp-AMP and then transferred to the acceptor end of tRNA(Asp/Asn). This is Aspartate--tRNA(Asp/Asn) ligase from Cereibacter sphaeroides (strain ATCC 17025 / ATH 2.4.3) (Rhodobacter sphaeroides).